The chain runs to 1024 residues: P3N-PIPO polyprotein (1024 aa).

One can recognise a Peptidase S30 domain in the interval 165–308 (RMSEASLQLF…KKQSNEIIHY (144 aa)). Residues H216, D225, and S259 each act as for P1 proteinase activity in the active site. The Involved in interaction with stylet and aphid transmission motif lies at 360–363 (KITC). Positions 619-621 (PTK) match the Involved in virions binding and aphid transmission motif. Residues 645-767 (MFIAKAGYCY…DSNMKTYLVG (123 aa)) form the Peptidase C6 domain. Active-site for helper component proteinase activity residues include C653 and H726.

The protein belongs to the potyviridae P3N-PIPO polyprotein family. Interacts (via PIPO domain) with host PCaP1 protein; this interaction may help to anchor the movement complex to the plasma membrane from which the complex could move to the plasmodesmata. In terms of processing, potyviral RNA is expressed as two polyproteins which undergo post-translational proteolytic processing. Genome polyprotein is processed by NIa-pro, P1 and HC-pro proteinases resulting in the production of at least ten individual proteins. P3N-PIPO is cleaved by P1 and HC-pro proteinases resulting in the production of three individual proteins. The P1 proteinase and the HC-pro cleave only their respective C-termini autocatalytically.

The protein resides in the host cell junction. The protein localises to the host plasmodesma. It catalyses the reaction Hydrolyzes a Gly-|-Gly bond at its own C-terminus, commonly in the sequence -Tyr-Xaa-Val-Gly-|-Gly, in the processing of the potyviral polyprotein.. In terms of biological role, required for aphid transmission and also has proteolytic activity. Only cleaves a Gly-Gly dipeptide at its own C-terminus. Interacts with virions and aphid stylets. Acts as a suppressor of RNA-mediated gene silencing, also known as post-transcriptional gene silencing (PTGS), a mechanism of plant viral defense that limits the accumulation of viral RNAs. May have RNA-binding activity. Its function is as follows. Allows efficient cell to cell propagation, by bypassing the host cell wall barrier. Transports viral genome to neighboring plant cells directly through plasmosdesmata, without any budding. The protein is P3N-PIPO polyprotein of Plum pox potyvirus (strain D) (PPV).